Reading from the N-terminus, the 229-residue chain is Endonuclease V (229 aa).

Positions 36 and 104 each coordinate Mg(2+).

The protein belongs to the endonuclease V family. Mg(2+) is required as a cofactor.

It localises to the cytoplasm. It carries out the reaction Endonucleolytic cleavage at apurinic or apyrimidinic sites to products with a 5'-phosphate.. Its function is as follows. DNA repair enzyme involved in the repair of deaminated bases. Selectively cleaves double-stranded DNA at the second phosphodiester bond 3' to a deoxyinosine leaving behind the intact lesion on the nicked DNA. The chain is Endonuclease V from Pectobacterium carotovorum subsp. carotovorum (strain PC1).